The following is a 230-amino-acid chain: Ribosome-recycling factor, mitochondrial (230 aa).

The N-terminal 24 residues, 1–24, are a transit peptide targeting the mitochondrion; the sequence is MILTTARLNCRPVTVPRLFNRSFS.

It belongs to the RRF family.

Its subcellular location is the mitochondrion. Necessary for protein synthesis in mitochondria. Functions as a ribosome recycling factor in mitochondria. This is Ribosome-recycling factor, mitochondrial (RRF1) from Saccharomyces cerevisiae (strain ATCC 204508 / S288c) (Baker's yeast).